Here is a 963-residue protein sequence, read N- to C-terminus: Protocadherin alpha-C1 (963 aa).

The signal sequence occupies residues 1–18 (MVGCGVAVLCLWVSCGAA). Cadherin domains follow at residues 19–124 (AGQL…SPLF), 125–233 (PAGD…APVF), 234–340 (ERSV…APEL), 349–445 (VPED…TPNF), and 446–555 (PQPQ…YPVI). Over 19–683 (AGQLEYSVPE…GGQLSAQNLY (665 aa)) the chain is Extracellular. A glycan (N-linked (GlcNAc...) asparagine) is linked at Asn38. 2 N-linked (GlcNAc...) asparagine glycosylation sites follow: Asn248 and Asn274. Asn562 carries N-linked (GlcNAc...) asparagine glycosylation. The Cadherin 6 domain maps to 570 to 667 (VPRSARTGHL…NSVPQLLPDF (98 aa)). A helical membrane pass occupies residues 684 to 704 (LVIALACISFLFLGCLLFFVC). The Cytoplasmic segment spans residues 705-963 (TKLHQSPGCC…GNSTTDNSDQ (259 aa)). 4 PXXP repeats span residues 812 to 815 (PRQP), 845 to 848 (PGGP), 886 to 889 (PGNP), and 904 to 907 (PGSP). The tract at residues 812-907 (PRQPNPDWRY…PDKFIIPGSP (96 aa)) is 4 X 4 AA repeats of P-X-X-P. Residues 844 to 963 (GPGGPDQQWP…GNSTTDNSDQ (120 aa)) form a disordered region. The segment covering 922–936 (DKSDFITFGKKEETK) has biased composition (basic and acidic residues).

It localises to the cell membrane. In terms of biological role, potential calcium-dependent cell-adhesion protein. May be involved in the establishment and maintenance of specific neuronal connections in the brain. This Homo sapiens (Human) protein is Protocadherin alpha-C1 (PCDHAC1).